The chain runs to 224 residues: 7-cyano-7-deazaguanine synthase (224 aa).

10–20 (LSGGLDSATVV) contributes to the ATP binding site. Zn(2+) contacts are provided by cysteine 189, cysteine 199, cysteine 202, and cysteine 205.

It belongs to the QueC family. Zn(2+) serves as cofactor.

It catalyses the reaction 7-carboxy-7-deazaguanine + NH4(+) + ATP = 7-cyano-7-deazaguanine + ADP + phosphate + H2O + H(+). Its pathway is purine metabolism; 7-cyano-7-deazaguanine biosynthesis. Catalyzes the ATP-dependent conversion of 7-carboxy-7-deazaguanine (CDG) to 7-cyano-7-deazaguanine (preQ(0)). This Pseudomonas paraeruginosa (strain DSM 24068 / PA7) (Pseudomonas aeruginosa (strain PA7)) protein is 7-cyano-7-deazaguanine synthase.